A 182-amino-acid polypeptide reads, in one-letter code: Plasmolipin (182 aa).

Residues 1-35 (MAEFPSKVSTRTSSPAQGVGASVSALRPDLGFVRS) are Cytoplasmic-facing. Residue serine 9 is modified to Phosphoserine. In terms of domain architecture, MARVEL spans 32 to 166 (FVRSALGVLA…SAFFSFQAWR (135 aa)). Residues 36–56 (ALGVLALLQLALGLLVWALIA) traverse the membrane as a helical segment. At 57–68 (DTPYHLYPAYGW) the chain is on the extracellular side. Residues 69 to 89 (VMFVAVFLWLVTIVFFIIYLF) form a helical membrane-spanning segment. Over 90-99 (QLHMKLYMVP) the chain is Cytoplasmic. A helical transmembrane segment spans residues 100–120 (WPLVLLIFFVAATVLYITAFI). Residues 121–141 (ACAAAVDLTSLRGSRPYNQRS) lie on the Extracellular side of the membrane. The helical transmembrane segment at 142-162 (AASFFACLVMIAYGVSAFFSF) threads the bilayer. Over 163-182 (QAWRGVGSNAATSQMAGGYS) the chain is Cytoplasmic.

It belongs to the MAL family. In terms of assembly, forms oligomers. In terms of processing, phosphorylated.

Its subcellular location is the membrane. It localises to the cell membrane. The protein localises to the myelin membrane. It is found in the apical cell membrane. Main component of the myelin sheath that plays an important role in myelin membrane biogenesis and myelination. Plays an essential function in apical endocytosis. Regulates epithelial development through the regulation of apical endocytosis. Part of the intracellular machinery that mediates basolateral-to-apical transport of ICAM-1, an essential adhesion receptor in epithelial cells, from the subapical compartment in hepatic epithelial cells. This is Plasmolipin (Pllp) from Mus musculus (Mouse).